Reading from the N-terminus, the 356-residue chain is Phosphate acyltransferase (356 aa).

It belongs to the PlsX family. Homodimer. Probably interacts with PlsY.

The protein resides in the cytoplasm. The catalysed reaction is a fatty acyl-[ACP] + phosphate = an acyl phosphate + holo-[ACP]. It functions in the pathway lipid metabolism; phospholipid metabolism. Functionally, catalyzes the reversible formation of acyl-phosphate (acyl-PO(4)) from acyl-[acyl-carrier-protein] (acyl-ACP). This enzyme utilizes acyl-ACP as fatty acyl donor, but not acyl-CoA. This chain is Phosphate acyltransferase, found in Xanthobacter autotrophicus (strain ATCC BAA-1158 / Py2).